The following is a 470-amino-acid chain: Siroheme synthase (470 aa).

A precorrin-2 dehydrogenase /sirohydrochlorin ferrochelatase region spans residues 1–203 (MDYLPIFVEL…GQIQQAEKQL (203 aa)). Residues 22-23 (EV) and 43-44 (PE) each bind NAD(+). Ser-128 is subject to Phosphoserine. Residues 214–470 (GELALVGAGP…ISRPAVVDFA (257 aa)) are uroporphyrinogen-III C-methyltransferase. S-adenosyl-L-methionine is bound at residue Pro-223. Asp-246 serves as the catalytic Proton acceptor. The Proton donor role is filled by Lys-268. Residues 299 to 301 (GGD), Ile-304, 329 to 330 (TA), Met-381, and Gly-410 contribute to the S-adenosyl-L-methionine site.

It in the N-terminal section; belongs to the precorrin-2 dehydrogenase / sirohydrochlorin ferrochelatase family. The protein in the C-terminal section; belongs to the precorrin methyltransferase family.

The catalysed reaction is uroporphyrinogen III + 2 S-adenosyl-L-methionine = precorrin-2 + 2 S-adenosyl-L-homocysteine + H(+). It carries out the reaction precorrin-2 + NAD(+) = sirohydrochlorin + NADH + 2 H(+). It catalyses the reaction siroheme + 2 H(+) = sirohydrochlorin + Fe(2+). The protein operates within cofactor biosynthesis; adenosylcobalamin biosynthesis; precorrin-2 from uroporphyrinogen III: step 1/1. It participates in cofactor biosynthesis; adenosylcobalamin biosynthesis; sirohydrochlorin from precorrin-2: step 1/1. It functions in the pathway porphyrin-containing compound metabolism; siroheme biosynthesis; precorrin-2 from uroporphyrinogen III: step 1/1. Its pathway is porphyrin-containing compound metabolism; siroheme biosynthesis; siroheme from sirohydrochlorin: step 1/1. The protein operates within porphyrin-containing compound metabolism; siroheme biosynthesis; sirohydrochlorin from precorrin-2: step 1/1. Functionally, multifunctional enzyme that catalyzes the SAM-dependent methylations of uroporphyrinogen III at position C-2 and C-7 to form precorrin-2 via precorrin-1. Then it catalyzes the NAD-dependent ring dehydrogenation of precorrin-2 to yield sirohydrochlorin. Finally, it catalyzes the ferrochelation of sirohydrochlorin to yield siroheme. The protein is Siroheme synthase of Photorhabdus laumondii subsp. laumondii (strain DSM 15139 / CIP 105565 / TT01) (Photorhabdus luminescens subsp. laumondii).